The sequence spans 427 residues: UDP-N-acetylglucosamine 1-carboxyvinyltransferase (427 aa).

22-23 serves as a coordination point for phosphoenolpyruvate; sequence KN. Arginine 99 provides a ligand contact to UDP-N-acetyl-alpha-D-glucosamine. Cysteine 123 serves as the catalytic Proton donor. Cysteine 123 carries the 2-(S-cysteinyl)pyruvic acid O-phosphothioketal modification. Residues 128-132, aspartate 313, and isoleucine 335 each bind UDP-N-acetyl-alpha-D-glucosamine; that span reads RPIDL.

Belongs to the EPSP synthase family. MurA subfamily.

The protein resides in the cytoplasm. It carries out the reaction phosphoenolpyruvate + UDP-N-acetyl-alpha-D-glucosamine = UDP-N-acetyl-3-O-(1-carboxyvinyl)-alpha-D-glucosamine + phosphate. It participates in cell wall biogenesis; peptidoglycan biosynthesis. In terms of biological role, cell wall formation. Adds enolpyruvyl to UDP-N-acetylglucosamine. In Novosphingobium aromaticivorans (strain ATCC 700278 / DSM 12444 / CCUG 56034 / CIP 105152 / NBRC 16084 / F199), this protein is UDP-N-acetylglucosamine 1-carboxyvinyltransferase.